Reading from the N-terminus, the 127-residue chain is Small ribosomal subunit protein uS11 (127 aa).

The protein belongs to the universal ribosomal protein uS11 family. In terms of assembly, part of the 30S ribosomal subunit. Interacts with proteins S7 and S18. Binds to IF-3.

Its function is as follows. Located on the platform of the 30S subunit, it bridges several disparate RNA helices of the 16S rRNA. Forms part of the Shine-Dalgarno cleft in the 70S ribosome. The protein is Small ribosomal subunit protein uS11 of Prosthecochloris aestuarii (strain DSM 271 / SK 413).